Reading from the N-terminus, the 435-residue chain is Tol-Pal system protein TolB (435 aa).

Positions Met1–Ala20 are cleaved as a signal peptide.

Belongs to the TolB family. In terms of assembly, the Tol-Pal system is composed of five core proteins: the inner membrane proteins TolA, TolQ and TolR, the periplasmic protein TolB and the outer membrane protein Pal. They form a network linking the inner and outer membranes and the peptidoglycan layer.

It localises to the periplasm. Its function is as follows. Part of the Tol-Pal system, which plays a role in outer membrane invagination during cell division and is important for maintaining outer membrane integrity. The chain is Tol-Pal system protein TolB from Francisella tularensis subsp. holarctica (strain LVS).